Consider the following 556-residue polypeptide: Phenylalanine--tRNA ligase beta subunit (556 aa).

The region spanning 278 to 353 (LTPKEFEVEL…IAYGYNNIEP (76 aa)) is the B5 domain. 4 residues coordinate Mg(2+): aspartate 331, aspartate 337, glutamate 340, and aspartate 341.

Belongs to the phenylalanyl-tRNA synthetase beta subunit family. Type 2 subfamily. Tetramer of two alpha and two beta subunits. Mg(2+) is required as a cofactor.

It localises to the cytoplasm. The enzyme catalyses tRNA(Phe) + L-phenylalanine + ATP = L-phenylalanyl-tRNA(Phe) + AMP + diphosphate + H(+). This chain is Phenylalanine--tRNA ligase beta subunit, found in Pyrococcus horikoshii (strain ATCC 700860 / DSM 12428 / JCM 9974 / NBRC 100139 / OT-3).